Consider the following 469-residue polypeptide: Ribulose bisphosphate carboxylase large chain (469 aa).

An N6,N6,N6-trimethyllysine modification is found at lysine 8. Asparagine 117 and threonine 167 together coordinate substrate. Lysine 169 serves as the catalytic Proton acceptor. A substrate-binding site is contributed by lysine 171. Positions 195, 197, and 198 each coordinate Mg(2+). Lysine 195 is subject to N6-carboxylysine. The active-site Proton acceptor is the histidine 288. Positions 289, 321, and 373 each coordinate substrate.

Belongs to the RuBisCO large chain family. Type I subfamily. In terms of assembly, heterohexadecamer of 8 large chains and 8 small chains; disulfide-linked. The disulfide link is formed within the large subunit homodimers. Mg(2+) serves as cofactor. Post-translationally, the disulfide bond which can form in the large chain dimeric partners within the hexadecamer appears to be associated with oxidative stress and protein turnover.

It localises to the plastid. Its subcellular location is the chloroplast. The enzyme catalyses 2 (2R)-3-phosphoglycerate + 2 H(+) = D-ribulose 1,5-bisphosphate + CO2 + H2O. It carries out the reaction D-ribulose 1,5-bisphosphate + O2 = 2-phosphoglycolate + (2R)-3-phosphoglycerate + 2 H(+). In terms of biological role, ruBisCO catalyzes two reactions: the carboxylation of D-ribulose 1,5-bisphosphate, the primary event in carbon dioxide fixation, as well as the oxidative fragmentation of the pentose substrate in the photorespiration process. Both reactions occur simultaneously and in competition at the same active site. The protein is Ribulose bisphosphate carboxylase large chain of Persicaria senticosa (Knotweed).